A 307-amino-acid polypeptide reads, in one-letter code: Glutaminase (307 aa).

S66, N117, E161, N168, Y192, Y243, and V261 together coordinate substrate.

Belongs to the glutaminase family. Homotetramer.

The enzyme catalyses L-glutamine + H2O = L-glutamate + NH4(+). This is Glutaminase from Serratia proteamaculans (strain 568).